The sequence spans 310 residues: MKIIFMGTPTFAVPSLEKIYKEHEIISVFTKVDKPNARGKKINYSPIKEFALANNLKIYQPENFKDNTLIEEIRNMQADLIVVVAYGKILPKEVIDIPKYGVINLHSSLLPRFRGAAPINAAIINGDTKSGISIMYVEEELDAGDVILQEETEISDEDTFLSLHDRLKDMGADLLLKAIELIKKGEVKAQKQDKKLVTFVKPFRKEDCKIDWTKTSREIFNFIRGMNPIPTAFSNLNGTIIKIYETKINDKVYNNATCGEVVEYLKGKGIVVKTSDGSLIISSAKPENKKQMSGVDLINGKFLKIGEKLC.

A (6S)-5,6,7,8-tetrahydrofolate-binding site is contributed by Ser-108–Pro-111.

The protein belongs to the Fmt family.

It catalyses the reaction L-methionyl-tRNA(fMet) + (6R)-10-formyltetrahydrofolate = N-formyl-L-methionyl-tRNA(fMet) + (6S)-5,6,7,8-tetrahydrofolate + H(+). Attaches a formyl group to the free amino group of methionyl-tRNA(fMet). The formyl group appears to play a dual role in the initiator identity of N-formylmethionyl-tRNA by promoting its recognition by IF2 and preventing the misappropriation of this tRNA by the elongation apparatus. This is Methionyl-tRNA formyltransferase from Fusobacterium nucleatum subsp. nucleatum (strain ATCC 25586 / DSM 15643 / BCRC 10681 / CIP 101130 / JCM 8532 / KCTC 2640 / LMG 13131 / VPI 4355).